The sequence spans 156 residues: Phosphopantetheine adenylyltransferase (156 aa).

Threonine 10 contributes to the substrate binding site. ATP is bound by residues 10–11 and histidine 18; that span reads TF. The substrate site is built by lysine 42, leucine 74, and arginine 88. ATP contacts are provided by residues 89–91, glutamate 99, and 124–130; these read GIR and WAFISSS.

It belongs to the bacterial CoaD family. Homohexamer. Mg(2+) serves as cofactor.

It is found in the cytoplasm. It carries out the reaction (R)-4'-phosphopantetheine + ATP + H(+) = 3'-dephospho-CoA + diphosphate. It functions in the pathway cofactor biosynthesis; coenzyme A biosynthesis; CoA from (R)-pantothenate: step 4/5. Functionally, reversibly transfers an adenylyl group from ATP to 4'-phosphopantetheine, yielding dephospho-CoA (dPCoA) and pyrophosphate. This chain is Phosphopantetheine adenylyltransferase, found in Hamiltonella defensa subsp. Acyrthosiphon pisum (strain 5AT).